A 178-amino-acid chain; its full sequence is Deoxycytidylate deaminase (178 aa).

Residues 14 to 145 (EWPEYFMAVA…EETTAARLLF (132 aa)) form the CMP/dCMP-type deaminase domain. A Zn(2+)-binding site is contributed by histidine 84. The active-site Proton donor is glutamate 86. Zn(2+) contacts are provided by cysteine 110 and cysteine 113. Position 174 is a phosphoserine (serine 174).

Belongs to the cytidine and deoxycytidylate deaminase family. As to quaternary structure, homohexamer. Zn(2+) serves as cofactor.

It catalyses the reaction dCMP + H2O + H(+) = dUMP + NH4(+). The catalysed reaction is 5-hydroxymethyl-dCMP + H2O + H(+) = 5-hydroxymethyl-dUMP + NH4(+). With respect to regulation, allosteric enzyme whose activity is greatly influenced by the end products of its metabolic pathway, dCTP and dTTP. Functionally, catalyzes the deamination of dCMP to dUMP, providing the nucleoside monophosphate substrate for the thymidylate synthase/TYMS. Also, part of a nucleotide salvage pathway that eliminates epigenetically modified 5-hydroxymethyl-dCMP (hmdCMP) in a two-step process entailing deamination to cytotoxic 5-hydroxymethyl-dUMP (hmdUMP), followed by its hydrolysis into 5-hydroxymethyluracil (hmU) and 2-deoxy-D-ribose 5-phosphate (deoxyribosephosphate). Catalyzes the first step in that pathway, the deamination of 5-hydroxymethyl-dCMP (hmdCMP). The polypeptide is Deoxycytidylate deaminase (Mus musculus (Mouse)).